Here is a 167-residue protein sequence, read N- to C-terminus: Signal peptidase complex subunit 3A (167 aa).

Residues 1 to 11 lie on the Cytoplasmic side of the membrane; the sequence is MHTFGYRANAL. A helical; Signal-anchor for type II membrane protein membrane pass occupies residues 12–32; sequence LTFAVTALAFICAIASFSDKF. Residues 33–167 lie on the Lumenal side of the membrane; the sequence is SNQNPSAEIQ…PGYSLPDAYR (135 aa). N136 is a glycosylation site (N-linked (GlcNAc...) asparagine).

The protein belongs to the SPCS3 family. As to quaternary structure, component of the signal peptidase complex (SPC) composed of a catalytic subunit SEC11 and three accessory subunits SPCS1, SPCS2 and SPCS3. The complex induces a local thinning of the ER membrane which is used to measure the length of the signal peptide (SP) h-region of protein substrates. This ensures the selectivity of the complex towards h-regions shorter than 18-20 amino acids.

The protein localises to the endoplasmic reticulum membrane. Essential component of the signal peptidase complex (SPC) which catalyzes the cleavage of N-terminal signal sequences from nascent proteins as they are translocated into the lumen of the endoplasmic reticulum. Essential for the SPC catalytic activity, possibly by stabilizing and positioning the active center of the complex close to the lumenal surface. This Arabidopsis thaliana (Mouse-ear cress) protein is Signal peptidase complex subunit 3A.